Here is a 602-residue protein sequence, read N- to C-terminus: Elongation factor 4 (602 aa).

Residues 5 to 187 (DHIRNFAIIA…QIIVSLPAPE (183 aa)) form the tr-type G domain. Residues 17–22 (DHGKST) and 134–137 (NKVD) each bind GTP.

Belongs to the TRAFAC class translation factor GTPase superfamily. Classic translation factor GTPase family. LepA subfamily.

Its subcellular location is the cell inner membrane. The catalysed reaction is GTP + H2O = GDP + phosphate + H(+). Required for accurate and efficient protein synthesis under certain stress conditions. May act as a fidelity factor of the translation reaction, by catalyzing a one-codon backward translocation of tRNAs on improperly translocated ribosomes. Back-translocation proceeds from a post-translocation (POST) complex to a pre-translocation (PRE) complex, thus giving elongation factor G a second chance to translocate the tRNAs correctly. Binds to ribosomes in a GTP-dependent manner. The protein is Elongation factor 4 of Pelagibacter ubique (strain HTCC1062).